Consider the following 446-residue polypeptide: Chromosomal replication initiator protein DnaA (446 aa).

Residues Met-1 to Lys-73 form a domain I, interacts with DnaA modulators region. Positions Lys-73 to Ser-107 are domain II. The domain III, AAA+ region stretch occupies residues Met-108 to Ser-324. ATP-binding residues include Gly-152, Gly-154, Lys-155, and Thr-156. The tract at residues Ser-325–Lys-446 is domain IV, binds dsDNA.

This sequence belongs to the DnaA family. Oligomerizes as a right-handed, spiral filament on DNA at oriC.

The protein resides in the cytoplasm. Its function is as follows. Plays an essential role in the initiation and regulation of chromosomal replication. ATP-DnaA binds to the origin of replication (oriC) to initiate formation of the DNA replication initiation complex once per cell cycle. Binds the DnaA box (a 9 base pair repeat at the origin) and separates the double-stranded (ds)DNA. Forms a right-handed helical filament on oriC DNA; dsDNA binds to the exterior of the filament while single-stranded (ss)DNA is stabiized in the filament's interior. The ATP-DnaA-oriC complex binds and stabilizes one strand of the AT-rich DNA unwinding element (DUE), permitting loading of DNA polymerase. After initiation quickly degrades to an ADP-DnaA complex that is not apt for DNA replication. Binds acidic phospholipids. The protein is Chromosomal replication initiator protein DnaA of Clostridium acetobutylicum (strain ATCC 824 / DSM 792 / JCM 1419 / IAM 19013 / LMG 5710 / NBRC 13948 / NRRL B-527 / VKM B-1787 / 2291 / W).